Consider the following 1120-residue polypeptide: Vacuolar cation-chloride cotransporter 1 (1120 aa).

A disordered region spans residues 1–21 (MVSRFYQIPGTHRPSSAISSS). Topologically, residues 1-62 (MVSRFYQIPG…YDPDNPNKDK (62 aa)) are cytoplasmic. Residue S34 is modified to Phosphoserine. The helical transmembrane segment at 63-83 (LGTYDGVFVPTALNVLSILMF) threads the bilayer. The Vacuolar segment spans residues 84 to 85 (LR). A helical transmembrane segment spans residues 86–106 (FGFILGQLGIICTIGLLLLSY). The Cytoplasmic segment spans residues 107–145 (TINLLTTLSISAISTNGTVRGGGAYYMISRSLGPEFGGS). Residues 146–166 (IGLVFFLGQVFNAGMNAVGII) traverse the membrane as a helical segment. The Vacuolar segment spans residues 167–193 (EPLLYNLGYSAQGEPPAALGELLPRGH). A helical transmembrane segment spans residues 194 to 214 (WHEFTYATVILFLCFSVAFVG). Residues 215–221 (SQTVSRA) are Cytoplasmic-facing. A helical membrane pass occupies residues 222-242 (GNILFLVLAASIFSIPLSALI). Residues 243-283 (RSPFTEGGISYTGPSWQTFHDNLLPHLTKGAAGSLLKGKET) lie on the Vacuolar side of the membrane. Residues 284-304 (FNDLFGVFFPATAGIFAGAGM) traverse the membrane as a helical segment. Residues 305 to 317 (SSELRKPSKSIPK) are Cytoplasmic-facing. The chain crosses the membrane as a helical span at residues 318 to 338 (GTLWGLLFTFICYAVVVFSMG). The Vacuolar segment spans residues 339 to 360 (CSIPRRSLYDEVQIIQTISSVQ). A helical transmembrane segment spans residues 361–381 (WVIFMGEMATSLFSIIVGMLG). Over 382 to 393 (AAYVLEAIAKDN) the chain is Cytoplasmic. The chain crosses the membrane as a helical span at residues 394 to 414 (IIPGLEIFAHSPLYSLIFTWI). Topologically, residues 415-430 (LTQLCLFSDVNKIATF) are vacuolar. The chain crosses the membrane as a helical span at residues 431-451 (ITMTFLMTFVVMNLACFLLGI). The Cytoplasmic segment spans residues 452–462 (SSAPNFRPSFK). Residues 463 to 482 (YFNRYTTAIGALLSVVAMLI) form a helical membrane-spanning segment. The Vacuolar segment spans residues 483-487 (VDGIS). Residues 488–506 (ASVLFLAMILLFLFIHYFS) form a helical membrane-spanning segment. The Cytoplasmic segment spans residues 507-1120 (PPKSWGDVSQ…SQTMTVTTAL (614 aa)). Residues S654, S915, and S918 each carry the phosphoserine modification.

The protein belongs to the SLC12A transporter family.

The protein resides in the vacuole membrane. Its function is as follows. Catalyzes the coordinated symport of chloride with potassium ions across the vacuolar membrane. Involved in vacuolar osmoregulation. This is Vacuolar cation-chloride cotransporter 1 from Saccharomyces cerevisiae (strain ATCC 204508 / S288c) (Baker's yeast).